We begin with the raw amino-acid sequence, 462 residues long: Putative amidase AmiB2 (462 aa).

Catalysis depends on charge relay system residues K81 and S155. Residue S179 is the Acyl-ester intermediate of the active site.

The protein belongs to the amidase family.

It catalyses the reaction a monocarboxylic acid amide + H2O = a monocarboxylate + NH4(+). This chain is Putative amidase AmiB2 (amiB2), found in Mycobacterium bovis (strain ATCC BAA-935 / AF2122/97).